A 224-amino-acid polypeptide reads, in one-letter code: MSIRDWPAAERPREKLLAQGAAALTDAELLAIFLRTGVAGCSAVDLARRLLAEFGSLRALLEAELPDFSQHLGLGPAKYAQLQAVLEMARRHLAERLRRDSALESPQAVRDYLKAQLRHEPHEVFGCLFLDAKHRVLAFEVLFRGSIDSASVYPRQVVKRALANNAAAVILTHNHPSGVCEPSQADRVLTQRLKDALALVEVRVLDHFIVGDGEPLSMAELGWM.

The 123-residue stretch at 102–224 (ALESPQAVRD…PLSMAELGWM (123 aa)) folds into the MPN domain. The Zn(2+) site is built by histidine 173, histidine 175, and aspartate 186. Residues 173–186 (HNHPSGVCEPSQAD) carry the JAMM motif motif.

This sequence belongs to the UPF0758 family.

The polypeptide is UPF0758 protein Pmen_4376 (Ectopseudomonas mendocina (strain ymp) (Pseudomonas mendocina)).